The following is a 312-amino-acid chain: Putative mitochondrial transporter UCP3 (312 aa).

Over methionine 1–proline 10 the chain is Mitochondrial intermembrane. A helical transmembrane segment spans residues proline 11–phenylalanine 32. 3 Solcar repeats span residues proline 11–valine 105, serine 114–lysine 206, and aspartate 215–alanine 300. At proline 33–serine 76 the chain is on the mitochondrial matrix side. Residues proline 77 to tyrosine 99 traverse the membrane as a helical segment. Residues aspartate 100–arginine 119 lie on the Mitochondrial intermembrane side of the membrane. Residues isoleucine 120 to proline 136 form a helical membrane-spanning segment. The Mitochondrial matrix segment spans residues threonine 137–leucine 183. The helical transmembrane segment at proline 184–tyrosine 200 threads the bilayer. Topologically, residues aspartate 201 to phenylalanine 217 are mitochondrial intermembrane. The chain crosses the membrane as a helical span at residues proline 218–proline 237. Residues valine 238–alanine 271 are Mitochondrial matrix-facing. The helical transmembrane segment at phenylalanine 272–tyrosine 294 threads the bilayer. The segment at serine 279 to leucine 301 is purine nucleotide binding. Residues glutamate 295 to phenylalanine 312 lie on the Mitochondrial intermembrane side of the membrane.

Belongs to the mitochondrial carrier (TC 2.A.29) family. In terms of assembly, interacts with HAX1; the interaction is direct and calcium-dependent. As to expression, only in skeletal muscle and heart. Also expressed in white and brown adipose tissues. Is more expressed in glycolytic than in oxidative skeletal muscles.

It is found in the mitochondrion inner membrane. With respect to regulation, the proton transporter activity is activated by fatty acids (in vitro). The proton transporter activity is inhibited by ATP and ADP (in vitro). The effect of Ubiquinone/coenzyme Q10 on the proton transporter activity in reconstituted membranes is unclear (in vitro). Putative transmembrane transporter that plays a role in mitochondrial metabolism via an as yet unclear mechanism. Originally, this mitochondrial protein was thought to act as a proton transmembrane transporter from the mitochondrial intermembrane space into the matrix, causing proton leaks through the inner mitochondrial membrane, thereby uncoupling mitochondrial membrane potential generation from ATP synthesis. However, this function is controversial and uncoupling may not be the function, or at least not the main function, but rather a consequence of more conventional metabolite transporter activity. This is Putative mitochondrial transporter UCP3 from Homo sapiens (Human).